We begin with the raw amino-acid sequence, 261 residues long: Small ribosomal subunit protein mS23 (261 aa).

Residues 228-261 form a disordered region; it reads EQRAAAFTGAPEIPSTEDSLGLEEGVEEKQPQQA.

The protein belongs to the mitochondrion-specific ribosomal protein mS23 family. Component of the mitochondrial small ribosomal subunit.

Its subcellular location is the mitochondrion. The polypeptide is Small ribosomal subunit protein mS23 (rsm25) (Aspergillus oryzae (strain ATCC 42149 / RIB 40) (Yellow koji mold)).